The chain runs to 184 residues: MGRPGSQPNEAQPPPVQVQPTVNRDNQVHSQNGAIGQANIQTGRPVNNQTQNLWSSDLFDCMNDSENAVITCLAPCVTLGQIAEIVDEGATPCATGGLLYGMIFFIGVPFVYSCMFRAKMRNKYGLPDAPAPDWITHLFCEHCALCQEYRELKHRGFDPNIGWAGNVQAQQPVMSPPTGQRMMG.

The segment covering 1–10 has biased composition (polar residues); it reads MGRPGSQPNE. The interval 1 to 21 is disordered; sequence MGRPGSQPNEAQPPPVQVQPT. Residues 96–116 form a helical membrane-spanning segment; it reads GGLLYGMIFFIGVPFVYSCMF.

The protein belongs to the cornifelin family.

The protein resides in the membrane. May be involved in heavy metals transport. This is Protein PLANT CADMIUM RESISTANCE 4 (PCR4) from Arabidopsis thaliana (Mouse-ear cress).